Here is a 79-residue protein sequence, read N- to C-terminus: Small ribosomal subunit protein bS18 (79 aa).

The protein belongs to the bacterial ribosomal protein bS18 family. Part of the 30S ribosomal subunit. Forms a tight heterodimer with protein bS6.

Binds as a heterodimer with protein bS6 to the central domain of the 16S rRNA, where it helps stabilize the platform of the 30S subunit. In Streptococcus pneumoniae (strain Hungary19A-6), this protein is Small ribosomal subunit protein bS18.